The following is a 243-amino-acid chain: Methylthioribulose-1-phosphate dehydratase (243 aa).

Positions 1–22 (MCPADQTVATNNNDHLVQSEDP) are disordered. Residues 7-16 (TVATNNNDHL) are compositionally biased toward polar residues. C103 lines the substrate pocket. Zn(2+)-binding residues include H120 and H122. Residue E149 is the Proton donor/acceptor of the active site. H205 provides a ligand contact to Zn(2+).

It belongs to the aldolase class II family. MtnB subfamily. It depends on Zn(2+) as a cofactor.

The protein resides in the cytoplasm. It catalyses the reaction 5-(methylsulfanyl)-D-ribulose 1-phosphate = 5-methylsulfanyl-2,3-dioxopentyl phosphate + H2O. It participates in amino-acid biosynthesis; L-methionine biosynthesis via salvage pathway; L-methionine from S-methyl-5-thio-alpha-D-ribose 1-phosphate: step 2/6. Functionally, catalyzes the dehydration of methylthioribulose-1-phosphate (MTRu-1-P) into 2,3-diketo-5-methylthiopentyl-1-phosphate (DK-MTP-1-P). This chain is Methylthioribulose-1-phosphate dehydratase, found in Penicillium rubens (strain ATCC 28089 / DSM 1075 / NRRL 1951 / Wisconsin 54-1255) (Penicillium chrysogenum).